Reading from the N-terminus, the 192-residue chain is Cytidylate kinase (192 aa).

7 to 15 contacts ATP; the sequence is GPAGSGKST.

It belongs to the cytidylate kinase family. Type 2 subfamily.

It localises to the cytoplasm. The enzyme catalyses CMP + ATP = CDP + ADP. It catalyses the reaction dCMP + ATP = dCDP + ADP. The polypeptide is Cytidylate kinase (Natronomonas pharaonis (strain ATCC 35678 / DSM 2160 / CIP 103997 / JCM 8858 / NBRC 14720 / NCIMB 2260 / Gabara) (Halobacterium pharaonis)).